Consider the following 369-residue polypeptide: Glutamate 5-kinase (369 aa).

Residue K7 participates in ATP binding. Residues S48, D135, and N147 each coordinate substrate. Residues 167-168 and 208-214 contribute to the ATP site; these read TD and SGGMASK. One can recognise a PUA domain in the interval 275–353; the sequence is AGALHLDEGA…HEIAALLGIE (79 aa).

It belongs to the glutamate 5-kinase family.

It is found in the cytoplasm. The catalysed reaction is L-glutamate + ATP = L-glutamyl 5-phosphate + ADP. It participates in amino-acid biosynthesis; L-proline biosynthesis; L-glutamate 5-semialdehyde from L-glutamate: step 1/2. In terms of biological role, catalyzes the transfer of a phosphate group to glutamate to form L-glutamate 5-phosphate. The polypeptide is Glutamate 5-kinase (Gloeobacter violaceus (strain ATCC 29082 / PCC 7421)).